A 23-amino-acid polypeptide reads, in one-letter code: Unknown protein NF005 from 2D-PAGE (23 aa).

The segment at 1–23 (AGKARKQLSKNEDTKLKEQYIXD) is disordered. Residues 9-23 (SKNEDTKLKEQYIXD) are compositionally biased toward basic and acidic residues.

The polypeptide is Unknown protein NF005 from 2D-PAGE (Naegleria fowleri (Brain eating amoeba)).